The chain runs to 60 residues: Single-pass membrane and coiled-coil domain-containing protein 4 homolog (60 aa).

The tract at residues 1–23 (MRKLRGGQTKETRKQRQERKEEN) is disordered. The segment covering 8–23 (QTKETRKQRQERKEEN) has biased composition (basic and acidic residues). Positions 8–33 (QTKETRKQRQERKEENLKIQQQMKTI) form a coiled coil. A helical membrane pass occupies residues 31 to 51 (KTIVLPTIGVIFLCIVVYVFL).

This sequence belongs to the SMCO4 family.

The protein resides in the membrane. The chain is Single-pass membrane and coiled-coil domain-containing protein 4 homolog from Anopheles gambiae (African malaria mosquito).